Consider the following 721-residue polypeptide: Catalase-peroxidase (721 aa).

The segment at residues 89-212 (WHSAGTYRTG…LAAVQMGLIY (124 aa)) is a cross-link (tryptophyl-tyrosyl-methioninium (Trp-Tyr) (with M-238)). The active-site Proton acceptor is His-90. A cross-link (tryptophyl-tyrosyl-methioninium (Tyr-Met) (with W-89)) is located at residues 212 to 238 (YVNPEGPNGDPDPFAAAVDIRETFARM). His-253 is a heme b binding site.

Belongs to the peroxidase family. Peroxidase/catalase subfamily. Homodimer or homotetramer. Requires heme b as cofactor. Formation of the three residue Trp-Tyr-Met cross-link is important for the catalase, but not the peroxidase activity of the enzyme.

It carries out the reaction H2O2 + AH2 = A + 2 H2O. It catalyses the reaction 2 H2O2 = O2 + 2 H2O. Its function is as follows. Bifunctional enzyme with both catalase and broad-spectrum peroxidase activity. This is Catalase-peroxidase from Shewanella baltica (strain OS155 / ATCC BAA-1091).